Consider the following 123-residue polypeptide: Glycine cleavage system H protein (123 aa).

The Lipoyl-binding domain maps to 22–104 (VATVGITSYA…FGAGWLVKVR (83 aa)). Residue Lys63 is modified to N6-lipoyllysine.

Belongs to the GcvH family. In terms of assembly, the glycine cleavage system is composed of four proteins: P, T, L and H. Requires (R)-lipoate as cofactor.

Functionally, the glycine cleavage system catalyzes the degradation of glycine. The H protein shuttles the methylamine group of glycine from the P protein to the T protein. The sequence is that of Glycine cleavage system H protein from Clavibacter sepedonicus (Clavibacter michiganensis subsp. sepedonicus).